Here is a 538-residue protein sequence, read N- to C-terminus: Bifunctional purine biosynthesis protein PurH (538 aa).

In terms of domain architecture, MGS-like spans 6-158 (KHIPAPDLHR…KNHAYVATVV (153 aa)).

This sequence belongs to the PurH family.

The catalysed reaction is (6R)-10-formyltetrahydrofolate + 5-amino-1-(5-phospho-beta-D-ribosyl)imidazole-4-carboxamide = 5-formamido-1-(5-phospho-D-ribosyl)imidazole-4-carboxamide + (6S)-5,6,7,8-tetrahydrofolate. It carries out the reaction IMP + H2O = 5-formamido-1-(5-phospho-D-ribosyl)imidazole-4-carboxamide. It functions in the pathway purine metabolism; IMP biosynthesis via de novo pathway; 5-formamido-1-(5-phospho-D-ribosyl)imidazole-4-carboxamide from 5-amino-1-(5-phospho-D-ribosyl)imidazole-4-carboxamide (10-formyl THF route): step 1/1. It participates in purine metabolism; IMP biosynthesis via de novo pathway; IMP from 5-formamido-1-(5-phospho-D-ribosyl)imidazole-4-carboxamide: step 1/1. The sequence is that of Bifunctional purine biosynthesis protein PurH from Brucella abortus (strain S19).